The primary structure comprises 350 residues: NADH-quinone oxidoreductase subunit H (350 aa).

Transmembrane regions (helical) follow at residues F5–M25, F76–I96, I118–G138, I162–V182, M190–A210, L243–G263, L284–V304, and L319–I339.

The protein belongs to the complex I subunit 1 family. NDH-1 is composed of 14 different subunits. Subunits NuoA, H, J, K, L, M, N constitute the membrane sector of the complex.

The protein resides in the cell inner membrane. It carries out the reaction a quinone + NADH + 5 H(+)(in) = a quinol + NAD(+) + 4 H(+)(out). In terms of biological role, NDH-1 shuttles electrons from NADH, via FMN and iron-sulfur (Fe-S) centers, to quinones in the respiratory chain. The immediate electron acceptor for the enzyme in this species is believed to be ubiquinone. Couples the redox reaction to proton translocation (for every two electrons transferred, four hydrogen ions are translocated across the cytoplasmic membrane), and thus conserves the redox energy in a proton gradient. This subunit may bind ubiquinone. The chain is NADH-quinone oxidoreductase subunit H from Flavobacterium johnsoniae (strain ATCC 17061 / DSM 2064 / JCM 8514 / BCRC 14874 / CCUG 350202 / NBRC 14942 / NCIMB 11054 / UW101) (Cytophaga johnsonae).